Reading from the N-terminus, the 116-residue chain is T cell receptor alpha variable 38-2/delta variable 8 (116 aa).

A signal peptide spans 1–21; it reads MACPGFLWALVISTCLEFSMA. One can recognise an Ig-like domain in the interval 22 to 116; that stretch reads QTVTQSQPEM…AAMYFCAYRS (95 aa). Cys-43 and Cys-112 are disulfide-bonded. Asn-78 carries an N-linked (GlcNAc...) asparagine glycan.

As to quaternary structure, alpha-beta TR is a heterodimer composed of an alpha and beta chain; disulfide-linked. The alpha-beta TR is associated with the transmembrane signaling CD3 coreceptor proteins to form the TR-CD3 (TcR or TCR). The assembly of alpha-beta TR heterodimers with CD3 occurs in the endoplasmic reticulum where a single alpha-beta TR heterodimer associates with one CD3D-CD3E heterodimer, one CD3G-CD3E heterodimer and one CD247 homodimer forming a stable octameric structure. CD3D-CD3E and CD3G-CD3E heterodimers preferentially associate with TR alpha and TR beta chains, respectively. The association of the CD247 homodimer is the last step of TcR assembly in the endoplasmic reticulum and is required for transport to the cell surface.

The protein resides in the cell membrane. Functionally, v region of the variable domain of T cell receptor (TR) alpha chain that participates in the antigen recognition. Alpha-beta T cell receptors are antigen specific receptors which are essential to the immune response and are present on the cell surface of T lymphocytes. Recognize peptide-major histocompatibility (MH) (pMH) complexes that are displayed by antigen presenting cells (APC), a prerequisite for efficient T cell adaptive immunity against pathogens. Binding of alpha-beta TR to pMH complex initiates TR-CD3 clustering on the cell surface and intracellular activation of LCK that phosphorylates the ITAM motifs of CD3G, CD3D, CD3E and CD247 enabling the recruitment of ZAP70. In turn ZAP70 phosphorylates LAT, which recruits numerous signaling molecules to form the LAT signalosome. The LAT signalosome propagates signal branching to three major signaling pathways, the calcium, the mitogen-activated protein kinase (MAPK) kinase and the nuclear factor NF-kappa-B (NF-kB) pathways, leading to the mobilization of transcription factors that are critical for gene expression and essential for T cell growth and differentiation. The T cell repertoire is generated in the thymus, by V-(D)-J rearrangement. This repertoire is then shaped by intrathymic selection events to generate a peripheral T cell pool of self-MH restricted, non-autoaggressive T cells. Post-thymic interaction of alpha-beta TR with the pMH complexes shapes TR structural and functional avidity. In Homo sapiens (Human), this protein is T cell receptor alpha variable 38-2/delta variable 8.